A 345-amino-acid polypeptide reads, in one-letter code: Twinfilin (345 aa).

2 consecutive ADF-H domains span residues 4 to 139 (QTGI…KHKR) and 177 to 312 (GISC…DELH). Positions 320-345 (PAFAKPKGPPNRGAKRLTRPSNEDQV) are disordered.

It belongs to the actin-binding proteins ADF family. Twinfilin subfamily. Interacts with G-actin; ADP-actin form.

It localises to the cytoplasm. It is found in the cytoskeleton. Its subcellular location is the cell cortex. In terms of biological role, actin-binding protein involved in motile and morphological processes. Inhibits actin polymerization, likely by sequestering G-actin. This chain is Twinfilin (twf), found in Drosophila pseudoobscura pseudoobscura (Fruit fly).